We begin with the raw amino-acid sequence, 623 residues long: Transketolase (623 aa).

Position 1 is an N-acetylmethionine (M1). An N6-acetyllysine mark is found at K6 and K11. H37 serves as a coordination point for substrate. Residues S40 and H77 each coordinate thiamine diphosphate. At S104 the chain carries Phosphoserine. A thiamine diphosphate-binding site is contributed by G123–L125. K144 is subject to N6-acetyllysine. Mg(2+) is bound at residue D155. 2 residues coordinate thiamine diphosphate: G156 and N185. 2 residues coordinate Mg(2+): N185 and L187. 3 positions are modified to N6-acetyllysine: K204, K232, and K241. The thiamine diphosphate site is built by K244 and H258. H258 lines the substrate pocket. K260 is subject to N6-acetyllysine. Phosphotyrosine is present on Y275. T287 is subject to Phosphothreonine. Position 295 is a phosphoserine (S295). Substrate-binding residues include R318 and S345. A Phosphoserine modification is found at S345. A Glycyl lysine isopeptide (Lys-Gly) (interchain with G-Cter in SUMO2) cross-link involves residue K352. E366 acts as the Proton donor in catalysis. F392 lines the thiamine diphosphate pocket. H416 and D424 together coordinate substrate. Q428 is a binding site for thiamine diphosphate. R474 serves as a coordination point for substrate. 2 positions are modified to N6-acetyllysine: K538 and K603.

It belongs to the transketolase family. As to quaternary structure, homodimer. It depends on Mg(2+) as a cofactor. The cofactor is Ca(2+). Mn(2+) serves as cofactor. Requires Co(2+) as cofactor. Thiamine diphosphate is required as a cofactor.

It catalyses the reaction D-sedoheptulose 7-phosphate + D-glyceraldehyde 3-phosphate = aldehydo-D-ribose 5-phosphate + D-xylulose 5-phosphate. Its function is as follows. Catalyzes the transfer of a two-carbon ketol group from a ketose donor to an aldose acceptor, via a covalent intermediate with the cofactor thiamine pyrophosphate. This is Transketolase (Tkt) from Rattus norvegicus (Rat).